The sequence spans 276 residues: Aurora kinase C (276 aa).

Positions Phe-16 to Val-266 constitute a Protein kinase domain. ATP contacts are provided by residues Leu-22–Val-30 and Lys-45. Catalysis depends on Asp-139, which acts as the Proton acceptor. A Phosphothreonine; by PKA modification is found at Thr-171.

Belongs to the protein kinase superfamily. Ser/Thr protein kinase family. Aurora subfamily. As to quaternary structure, component of the chromosomal passenger complex (CPC) composed of at least BIRC5/survivin, CDCA8/borealin, INCENP, AURKB or AURKC; predominantly independent AURKB- and AURKC-containing complexes exist; in the complex interacts directly with BIRC5/survivin and INCENP. Interacts with TACC1. In terms of tissue distribution, expressed only in testis.

Its subcellular location is the nucleus. It is found in the chromosome. It localises to the centromere. The protein resides in the cytoplasm. The protein localises to the cytoskeleton. Its subcellular location is the spindle. The catalysed reaction is L-seryl-[protein] + ATP = O-phospho-L-seryl-[protein] + ADP + H(+). It carries out the reaction L-threonyl-[protein] + ATP = O-phospho-L-threonyl-[protein] + ADP + H(+). Okadaic acid, an inhibitor of protein phosphatase 1 (PP1), protein phosphatase 2A (PP2A) and protein phosphatase 5 (PP5), increases AURKC activity. AURKC is also stabilized through its interaction with INCENP, which also acts as an activator. Functionally, serine/threonine-protein kinase component of the chromosomal passenger complex (CPC), a complex that acts as a key regulator of mitosis. The CPC complex has essential functions at the centromere in ensuring correct chromosome alignment and segregation and is required for chromatin-induced microtubule stabilization and spindle assembly. Also plays a role in meiosis and more particularly in spermatogenesis. Has redundant cellular functions with AURKB and can rescue an AURKB knockdown. Like AURKB, AURKC phosphorylates histone H3 at 'Ser-10' and 'Ser-28'. AURKC phosphorylates the CPC complex subunits BIRC5/survivin and INCENP leading to increased AURKC activity. Phosphorylates TACC1, another protein involved in cell division, at 'Ser-228'. In Mus musculus (Mouse), this protein is Aurora kinase C (Aurkc).